Here is an 803-residue protein sequence, read N- to C-terminus: Volume-regulated anion channel subunit LRRC8C (803 aa).

Residues methionine 1–proline 22 lie on the Cytoplasmic side of the membrane. Residues tryptophan 23–methionine 48 traverse the membrane as a helical segment. Topologically, residues glutamine 49–alanine 124 are extracellular. Cystine bridges form between cysteine 54/cysteine 308 and cysteine 115/cysteine 293. Residues lysine 125 to phenylalanine 144 traverse the membrane as a helical segment. At tryptophan 145–tyrosine 262 the chain is on the cytoplasmic side. The segment at glutamate 177 to asparagine 206 is disordered. Over residues asparagine 191 to asparagine 206 the composition is skewed to polar residues. Phosphoserine is present on residues serine 212 and serine 215. Residues valine 263–valine 284 form a helical membrane-spanning segment. At serine 285–histidine 314 the chain is on the extracellular side. The helical transmembrane segment at leucine 315 to tyrosine 339 threads the bilayer. Residues tryptophan 340–aspartate 803 lie on the Cytoplasmic side of the membrane. LRR repeat units follow at residues tryptophan 409–threonine 420, asparagine 421–isoleucine 443, leucine 446–leucine 466, aspartate 467–phenylalanine 488, lysine 490–leucine 513, asparagine 515–serine 537, leucine 541–valine 563, histidine 566–lysine 586, methionine 588–leucine 611, serine 613–histidine 635, arginine 637–leucine 659, threonine 660–cysteine 682, lysine 684–leucine 705, glutamine 706–cysteine 728, lysine 730–leucine 751, leucine 752–cysteine 774, and alanine 776–glutamine 799.

Belongs to the LRRC8 family. In terms of assembly, heterohexamer; oligomerizes with other LRRC8 proteins (LRRC8A, LRRC8B, LRRC8D and/or LRRC8E) to form a heterohexamer. Homoheptamer; inactive, likely because it is not targeted to the plasma membrane in the absence of LRRC8A. In vivo, the subunit composition may depend primarily on expression levels, and heterooligomeric channels containing various proportions of the different LRRC8 proteins may coexist. In terms of tissue distribution, expressed at very low levels in adipose tissue.

The protein localises to the cell membrane. It is found in the endoplasmic reticulum membrane. It catalyses the reaction chloride(in) = chloride(out). The catalysed reaction is iodide(out) = iodide(in). The enzyme catalyses taurine(out) = taurine(in). It carries out the reaction 2',3'-cGAMP(out) = 2',3'-cGAMP(in). Functionally, non-essential component of the volume-regulated anion channel (VRAC, also named VSOAC channel), an anion channel required to maintain a constant cell volume in response to extracellular or intracellular osmotic changes. The VRAC channel conducts iodide better than chloride and can also conduct organic osmolytes like taurine. Plays a redundant role in the efflux of amino acids, such as aspartate and glutamate, in response to osmotic stress. The VRAC channel also mediates transport of immunoreactive cyclic dinucleotide GMP-AMP (2'-3'-cGAMP), an immune messenger produced in response to DNA virus in the cytosol. Channel activity requires LRRC8A plus at least one other family member (LRRC8B, LRRC8C, LRRC8D or LRRC8E); channel characteristics depend on the precise subunit composition. May play a role in adipogenesis. The sequence is that of Volume-regulated anion channel subunit LRRC8C from Mus musculus (Mouse).